A 253-amino-acid chain; its full sequence is Serine/threonine-protein phosphatase 3 (253 aa).

Requires Mn(2+) as cofactor. Post-translationally, phosphorylated by YegI.

The enzyme catalyses O-phospho-L-seryl-[protein] + H2O = L-seryl-[protein] + phosphate. It carries out the reaction O-phospho-L-threonyl-[protein] + H2O = L-threonyl-[protein] + phosphate. Activity dramatically decreases in the presence of the general protein phosphatase inhibitor sodium phosphate. Slightly inhibited by sodium fluoride. Activity decreases in the presence of the metal chelator EDTA. Functionally, PP2C-like phosphatase that can dephosphorylate YegI. In vitro, can hydrolyze p-nitrophenyl phosphate (pNPP) to p-nitrophenol. The polypeptide is Serine/threonine-protein phosphatase 3 (Escherichia coli (strain K12)).